A 283-amino-acid chain; its full sequence is MLRVAVPNKGSLSESAAEILSEAGYRRRTDSRDLTVLDPSNQVEFFFLRPKDIAIYVGSGELDLGITGRDLARDSGAPVAERLSLGFGRSTFRYAAPAGKDWTVEDLAGLRIATSYPNLVRDDLSARGIEASVIRLDGAVEISIQLGVADAIADVVGSGRTLRQHNLVAFGDTLCDSEGVLIERAGSPDDDSARNQLVERVRGIVFAQQNLMLDYDCPKTILDDALKITPGLESPTLSPLADENWVAVRAMVPIKGHNGVMDELADLGAKAILASNIRSCRAL.

This sequence belongs to the ATP phosphoribosyltransferase family. Long subfamily. The cofactor is Mg(2+).

The protein localises to the cytoplasm. The enzyme catalyses 1-(5-phospho-beta-D-ribosyl)-ATP + diphosphate = 5-phospho-alpha-D-ribose 1-diphosphate + ATP. Its pathway is amino-acid biosynthesis; L-histidine biosynthesis; L-histidine from 5-phospho-alpha-D-ribose 1-diphosphate: step 1/9. Its activity is regulated as follows. Feedback inhibited by histidine. In terms of biological role, catalyzes the condensation of ATP and 5-phosphoribose 1-diphosphate to form N'-(5'-phosphoribosyl)-ATP (PR-ATP). Has a crucial role in the pathway because the rate of histidine biosynthesis seems to be controlled primarily by regulation of HisG enzymatic activity. The chain is ATP phosphoribosyltransferase from Rhodococcus jostii (strain RHA1).